A 327-amino-acid chain; its full sequence is DNA-directed RNA polymerase subunit alpha (327 aa).

The segment at 1–233 (MQGSVTEFLK…EQLEAFVDLR (233 aa)) is alpha N-terminal domain (alpha-NTD). An alpha C-terminal domain (alpha-CTD) region spans residues 247-327 (FDPVLLRPVD…NWPPLGFIDK (81 aa)).

This sequence belongs to the RNA polymerase alpha chain family. In terms of assembly, homodimer. The RNAP catalytic core consists of 2 alpha, 1 beta, 1 beta' and 1 omega subunit. When a sigma factor is associated with the core the holoenzyme is formed, which can initiate transcription.

It carries out the reaction RNA(n) + a ribonucleoside 5'-triphosphate = RNA(n+1) + diphosphate. DNA-dependent RNA polymerase catalyzes the transcription of DNA into RNA using the four ribonucleoside triphosphates as substrates. The sequence is that of DNA-directed RNA polymerase subunit alpha from Baumannia cicadellinicola subsp. Homalodisca coagulata.